The primary structure comprises 624 residues: Matrilin-4 (624 aa).

Positions 1-21 are cleaved as a signal peptide; that stretch reads MRGPCCWPLSLLLLFLQSWET. The VWFA 1 domain occupies 36–215; that stretch reads DLVFMIDSSR…EFGLQFQGRL (180 aa). Asparagine 71 is a glycosylation site (N-linked (GlcNAc...) asparagine). 4 EGF-like domains span residues 217-257, 258-298, 299-339, and 340-380; these read GKDL…KNCL, ALDL…RSCR, AIDY…RSCR, and VRDF…KSCD. Disulfide bonds link cysteine 221–cysteine 232, cysteine 228–cysteine 241, cysteine 243–cysteine 256, cysteine 262–cysteine 273, cysteine 269–cysteine 282, cysteine 284–cysteine 297, cysteine 303–cysteine 314, cysteine 310–cysteine 323, cysteine 325–cysteine 338, cysteine 344–cysteine 355, cysteine 351–cysteine 364, and cysteine 366–cysteine 379. Asparagine 307 carries N-linked (GlcNAc...) asparagine glycosylation. One can recognise a VWFA 2 domain in the interval 388–563; that stretch reads DLVLLVDGSK…STMTHLLENL (176 aa). A coiled-coil region spans residues 590–623; the sequence is EFQGRTLGALESLTQNLARLTERLEELENQLASR.

Interacts with COMP. Lung, brain, sternum, kidney and heart.

It localises to the secreted. In terms of biological role, major component of the extracellular matrix of cartilage. This chain is Matrilin-4 (Matn4), found in Mus musculus (Mouse).